A 169-amino-acid chain; its full sequence is MICOS complex subunit MIC19 (169 aa).

G2 is lipidated: N-myristoyl glycine. The 43-residue stretch at 123–165 (ENVCQDNENEIVRCLQENPGRVLKCAPLTEAFEKCVGEFRQQV) folds into the CHCH domain. 2 consecutive short sequence motifs (cx9C motif) follow at residues 126–136 (CQDNENEIVRC) and 147–157 (CAPLTEAFEKC). 2 disulfides stabilise this stretch: C126–C157 and C136–C147.

Belongs to the MICOS complex subunit Mic19 family. Metazoan Mic19 subfamily. In terms of assembly, component of the mitochondrial contact site and cristae organizing system (MICOS) complex.

The protein localises to the mitochondrion inner membrane. Plays a role in maintaining mitochondrial morphology. May act as a component of the MICOS complex, a large protein complex of the mitochondria. In Caenorhabditis elegans, this protein is MICOS complex subunit MIC19.